The sequence spans 344 residues: Uroporphyrinogen decarboxylase (344 aa).

Substrate is bound by residues 27–31 (RQAGR), F46, D76, Y151, S206, and H319.

The protein belongs to the uroporphyrinogen decarboxylase family. In terms of assembly, homodimer.

The protein resides in the cytoplasm. The catalysed reaction is uroporphyrinogen III + 4 H(+) = coproporphyrinogen III + 4 CO2. It participates in porphyrin-containing compound metabolism; protoporphyrin-IX biosynthesis; coproporphyrinogen-III from 5-aminolevulinate: step 4/4. In terms of biological role, catalyzes the decarboxylation of four acetate groups of uroporphyrinogen-III to yield coproporphyrinogen-III. The sequence is that of Uroporphyrinogen decarboxylase from Halalkalibacterium halodurans (strain ATCC BAA-125 / DSM 18197 / FERM 7344 / JCM 9153 / C-125) (Bacillus halodurans).